A 451-amino-acid polypeptide reads, in one-letter code: DNA double-strand break repair protein Mre11 (451 aa).

Asp-8, His-10, Asp-49, and Asn-84 together coordinate Mn(2+). The active-site Proton donor is His-85. The Mn(2+) site is built by His-168, His-198, and His-200. Residues 374–451 (REDNPPDLGD…GRPSLDRWIG (78 aa)) are disordered. Acidic residues predominate over residues 396–416 (GSEESSEEPEESDGEEVGLEV).

The protein belongs to the MRE11/RAD32 family. As to quaternary structure, homodimer. Forms a heterotetramer composed of two Mre11 subunits and two Rad50 subunits. Mn(2+) is required as a cofactor.

Nuclease activity is regulated by Rad50. Its function is as follows. Part of the Rad50/Mre11 complex, which is involved in the early steps of DNA double-strand break (DSB) repair. The complex may facilitate opening of the processed DNA ends to aid in the recruitment of HerA and NurA. Mre11 binds to DSB ends and has both double-stranded 3'-5' exonuclease activity and single-stranded endonuclease activity. The sequence is that of DNA double-strand break repair protein Mre11 from Methanopyrus kandleri (strain AV19 / DSM 6324 / JCM 9639 / NBRC 100938).